The primary structure comprises 65 residues: Small ribosomal subunit protein eS17 (65 aa).

This sequence belongs to the eukaryotic ribosomal protein eS17 family.

This chain is Small ribosomal subunit protein eS17, found in Methanocella arvoryzae (strain DSM 22066 / NBRC 105507 / MRE50).